The following is a 358-amino-acid chain: Methylthioribose-1-phosphate isomerase (358 aa).

Substrate contacts are provided by residues 54-56 (RGA), Arg-96, and Gln-205. The active-site Proton donor is the Asp-246. 256 to 257 (NK) contributes to the substrate binding site.

Belongs to the eIF-2B alpha/beta/delta subunits family. MtnA subfamily.

The catalysed reaction is 5-(methylsulfanyl)-alpha-D-ribose 1-phosphate = 5-(methylsulfanyl)-D-ribulose 1-phosphate. Its pathway is amino-acid biosynthesis; L-methionine biosynthesis via salvage pathway; L-methionine from S-methyl-5-thio-alpha-D-ribose 1-phosphate: step 1/6. Catalyzes the interconversion of methylthioribose-1-phosphate (MTR-1-P) into methylthioribulose-1-phosphate (MTRu-1-P). This is Methylthioribose-1-phosphate isomerase from Pseudomonas paraeruginosa (strain DSM 24068 / PA7) (Pseudomonas aeruginosa (strain PA7)).